Here is a 356-residue protein sequence, read N- to C-terminus: MLYRDLTLRERQVLGIIIQSFVVSATPVGSRTIARNYNLGLSDATIRNVMADLEADGFISQPHTSAGRVPTDKGYRYYVDLLMNVSGIDEQEKQMIDARFSTRSSELKGTSAEVLGAAAKVLGSISRQLGVVLPPRLSNAVFERLDIVQLASTRIMVVIAIQSLFVKTIVMELTAEISRQKIDDVVNILNERLSGLTLEEIRSTIGKRLSDCQSREGLMNSIVGAADTLFDESSILDRLYVSGTENIVDQPEFKQPQKVRNIITMIEDKFGIARLVDNALPSGAYQGRDREVAISIGTENRTDNAIDLTIVSSPYYAGKMVGKVGIMGPKRMDYEHAVRVVNYMAGCLSEALSGNN.

The protein belongs to the HrcA family.

In terms of biological role, negative regulator of class I heat shock genes (grpE-dnaK-dnaJ and groELS operons). Prevents heat-shock induction of these operons. This is Heat-inducible transcription repressor HrcA from Chlorobaculum parvum (strain DSM 263 / NCIMB 8327) (Chlorobium vibrioforme subsp. thiosulfatophilum).